A 275-amino-acid polypeptide reads, in one-letter code: 4-hydroxy-tetrahydrodipicolinate reductase (275 aa).

NAD(+) is bound by residues 13-18 (GAAGKM) and 108-110 (GTT). H164 (proton donor/acceptor) is an active-site residue. H165 is a (S)-2,3,4,5-tetrahydrodipicolinate binding site. The Proton donor role is filled by K168. 174–175 (GT) provides a ligand contact to (S)-2,3,4,5-tetrahydrodipicolinate.

The protein belongs to the DapB family.

Its subcellular location is the cytoplasm. The enzyme catalyses (S)-2,3,4,5-tetrahydrodipicolinate + NAD(+) + H2O = (2S,4S)-4-hydroxy-2,3,4,5-tetrahydrodipicolinate + NADH + H(+). It catalyses the reaction (S)-2,3,4,5-tetrahydrodipicolinate + NADP(+) + H2O = (2S,4S)-4-hydroxy-2,3,4,5-tetrahydrodipicolinate + NADPH + H(+). It functions in the pathway amino-acid biosynthesis; L-lysine biosynthesis via DAP pathway; (S)-tetrahydrodipicolinate from L-aspartate: step 4/4. Functionally, catalyzes the conversion of 4-hydroxy-tetrahydrodipicolinate (HTPA) to tetrahydrodipicolinate. The protein is 4-hydroxy-tetrahydrodipicolinate reductase of Cyanothece sp. (strain PCC 7425 / ATCC 29141).